We begin with the raw amino-acid sequence, 151 residues long: 3-dehydroquinate dehydratase 1 (151 aa).

Tyrosine 23 acts as the Proton acceptor in catalysis. Positions 75, 81, and 88 each coordinate substrate. Histidine 101 acts as the Proton donor in catalysis. Substrate contacts are provided by residues 102–103 (LS) and arginine 112.

It belongs to the type-II 3-dehydroquinase family. Homododecamer.

The enzyme catalyses 3-dehydroquinate = 3-dehydroshikimate + H2O. The protein operates within metabolic intermediate biosynthesis; chorismate biosynthesis; chorismate from D-erythrose 4-phosphate and phosphoenolpyruvate: step 3/7. Catalyzes a trans-dehydration via an enolate intermediate. In Pseudomonas putida (strain ATCC 47054 / DSM 6125 / CFBP 8728 / NCIMB 11950 / KT2440), this protein is 3-dehydroquinate dehydratase 1 (aroQ1).